Here is a 324-residue protein sequence, read N- to C-terminus: NAD(P)H-dependent D-xylose reductase xyl1 (324 aa).

Tyr50 (proton donor) is an active-site residue. Residue His112 coordinates substrate. NAD(+) is bound by residues Ser168–Asn169, Ser217–Glu226, and Lys273–Asn283.

This sequence belongs to the aldo/keto reductase family.

It catalyses the reaction an alditol + NAD(+) = an aldose + NADH + H(+). The catalysed reaction is an alditol + NADP(+) = an aldose + NADPH + H(+). It carries out the reaction xylitol + NAD(+) = D-xylose + NADH + H(+). The enzyme catalyses xylitol + NADP(+) = D-xylose + NADPH + H(+). It participates in carbohydrate metabolism; D-xylose degradation. Its pathway is carbohydrate degradation; L-arabinose degradation via L-arabinitol; D-xylulose 5-phosphate from L-arabinose (fungal route): step 1/5. Catalyzes the initial reaction in the xylose utilization pathway by reducing D-xylose into xylitol. Xylose is a major component of hemicelluloses such as xylan. Most fungi utilize D-xylose via three enzymatic reactions, xylose reductase (XR), xylitol dehydrogenase (XDH), and xylulokinase, to form xylulose 5-phosphate, which enters pentose phosphate pathway. Also major aldose reductase in pentose and D-galactose catabolism. Reduces the pentose L-arabinose and the hexose D-galactose to their respective polyols. Responsible for extracellular beta-galactosidase formation and cellulase induction during growth on lactose. This is NAD(P)H-dependent D-xylose reductase xyl1 (xyl1) from Hypocrea jecorina (Trichoderma reesei).